Reading from the N-terminus, the 393-residue chain is tRNA(Met) cytidine acetate ligase (393 aa).

Residues G81, N142, and R167 each coordinate ATP.

Belongs to the TmcAL family.

The protein resides in the cytoplasm. The enzyme catalyses cytidine(34) in elongator tRNA(Met) + acetate + ATP = N(4)-acetylcytidine(34) in elongator tRNA(Met) + AMP + diphosphate. In terms of biological role, catalyzes the formation of N(4)-acetylcytidine (ac(4)C) at the wobble position of elongator tRNA(Met), using acetate and ATP as substrates. First activates an acetate ion to form acetyladenylate (Ac-AMP) and then transfers the acetyl group to tRNA to form ac(4)C34. The sequence is that of tRNA(Met) cytidine acetate ligase from Bacillus cereus (strain ATCC 14579 / DSM 31 / CCUG 7414 / JCM 2152 / NBRC 15305 / NCIMB 9373 / NCTC 2599 / NRRL B-3711).